A 294-amino-acid polypeptide reads, in one-letter code: Elongation factor Ts (294 aa).

The tract at residues 79-82 (TDFV) is involved in Mg(2+) ion dislocation from EF-Tu.

It belongs to the EF-Ts family.

It localises to the cytoplasm. In terms of biological role, associates with the EF-Tu.GDP complex and induces the exchange of GDP to GTP. It remains bound to the aminoacyl-tRNA.EF-Tu.GTP complex up to the GTP hydrolysis stage on the ribosome. This chain is Elongation factor Ts, found in Geobacillus thermodenitrificans (strain NG80-2).